A 265-amino-acid chain; its full sequence is Tryptophan synthase alpha chain (265 aa).

Catalysis depends on proton acceptor residues E49 and D60.

Belongs to the TrpA family. In terms of assembly, tetramer of two alpha and two beta chains.

It carries out the reaction (1S,2R)-1-C-(indol-3-yl)glycerol 3-phosphate + L-serine = D-glyceraldehyde 3-phosphate + L-tryptophan + H2O. It participates in amino-acid biosynthesis; L-tryptophan biosynthesis; L-tryptophan from chorismate: step 5/5. In terms of biological role, the alpha subunit is responsible for the aldol cleavage of indoleglycerol phosphate to indole and glyceraldehyde 3-phosphate. This chain is Tryptophan synthase alpha chain, found in Polynucleobacter asymbioticus (strain DSM 18221 / CIP 109841 / QLW-P1DMWA-1) (Polynucleobacter necessarius subsp. asymbioticus).